The sequence spans 282 residues: Keratin-associated protein 10-1 (282 aa).

A run of 24 repeats spans residues 26–30 (CCEPH), 31–35 (CCALS), 36–40 (CCAPA), 57–61 (CCQAA), 79–83 (CCQQS), 89–93 (CCTSS), 99–103 (CCVPV), 104–108 (CCKPV), 109–113 (CCLPT), 121–125 (CCQQS), 131–135 (CCASS), 141–145 (CCVPV), 146–150 (CCKPV), 163–167 (CCQQS), 173–177 (CCTSS), 183–187 (CCVPV), 193–197 (CCKPI), 198–202 (CCVPV), 210–214 (CCQQS), 220–224 (CCTTS), 225–229 (CCRPS), 244–248 (CCMPV), 251–255 (CCAPA), and 262–266 (CCRPA). Positions 26-266 (CCEPHCCALS…SCQASCCRPA (241 aa)) are 24 X 5 AA repeats of C-C-X(3).

It belongs to the KRTAP type 10 family. Interacts with hair keratins. In terms of tissue distribution, restricted to a narrow region of the hair fiber cuticle, lying approximately 20 cell layers above the apex of the dermal papilla of the hair root; not detected in any other tissues.

Functionally, in the hair cortex, hair keratin intermediate filaments are embedded in an interfilamentous matrix, consisting of hair keratin-associated proteins (KRTAP), which are essential for the formation of a rigid and resistant hair shaft through their extensive disulfide bond cross-linking with abundant cysteine residues of hair keratins. The matrix proteins include the high-sulfur and high-glycine-tyrosine keratins. This is Keratin-associated protein 10-1 (KRTAP10-1) from Homo sapiens (Human).